The following is a 1057-amino-acid chain: Probable E3 ubiquitin-protein ligase HERC4 (1057 aa).

RCC1 repeat units lie at residues 1–51, 52–101, 102–154, 156–207, 208–259, 261–311, and 313–368; these read MLCW…FVLD, DGTV…ALND, KGQV…ALSK, SEVF…VLTL, SGAI…ALTK, GGVF…AFVP, and SGRI…KRIF. The HECT domain occupies 730-1057; sequence KNIDYKKPLK…IDHNEGFSLI (328 aa). The Glycyl thioester intermediate role is filled by Cys-1025.

In terms of tissue distribution, expressed in brain and testis and detected in heart and placenta.

Its subcellular location is the cytoplasm. The protein resides in the cytosol. The enzyme catalyses S-ubiquitinyl-[E2 ubiquitin-conjugating enzyme]-L-cysteine + [acceptor protein]-L-lysine = [E2 ubiquitin-conjugating enzyme]-L-cysteine + N(6)-ubiquitinyl-[acceptor protein]-L-lysine.. Its pathway is protein modification; protein ubiquitination. In terms of biological role, probable E3 ubiquitin-protein ligase involved in either protein trafficking or in the distribution of cellular structures. Required for spermatozoon maturation and fertility, and for the removal of the cytoplasmic droplet of the spermatozoon. E3 ubiquitin-protein ligases accept ubiquitin from an E2 ubiquitin-conjugating enzyme in the form of a thioester and then directly transfer it to targeted substrates. In Homo sapiens (Human), this protein is Probable E3 ubiquitin-protein ligase HERC4 (HERC4).